Here is a 1074-residue protein sequence, read N- to C-terminus: DNA helicase B (1074 aa).

Disordered stretches follow at residues 1 to 38 (MARQDRLRELLGPLHPYKSDDEEEDCAQEEEGEQEEEF), 380 to 420 (GAKP…HVRS), and 932 to 1014 (GSCA…FDEE). The span at 20 to 38 (DDEEEDCAQEEEGEQEEEF) shows a compositional bias: acidic residues. A compositionally biased stretch (polar residues) spans 934–946 (CAPSTGFASQPSS). Phosphoserine is present on residues Ser942 and Ser946. Thr992 carries the phosphothreonine modification. Phosphoserine occurs at positions 1015 and 1026. The short motif at 1022 to 1046 (VEAPSPQVSSVFQNMRLNTLTPRQL) is the Nuclear export signal element. The disordered stretch occupies residues 1040-1074 (TLTPRQLFKPTDNQDTGTAGVADDANDPSNQEMEM).

It belongs to the RecD family. HELB subfamily. In terms of assembly, binds to RPA1; this interaction promotes HELB recruitment to chromatin following DNA damage. Interacts with at least two subunits of the DNA polymerase alpha complex. Interacts with CDC45. Interacts with TOPB1. Post-translationally, phosphorylated at Ser-942 by CDK2 during the G1/S transition, resulting in its nuclear export into the cytoplasm. As S phase progresses, its exclusion from the nucleus promotes the activation of long-range resection.

The protein resides in the nucleus. The protein localises to the cytoplasm. Its subcellular location is the chromosome. It carries out the reaction ATP + H2O = ADP + phosphate + H(+). Its function is as follows. 5'-3' DNA helicase involved in DNA damage response by acting as an inhibitor of DNA end resection. Recruitment to single-stranded DNA (ssDNA) following DNA damage leads to inhibit the nucleases catalyzing resection, such as EXO1, BLM and DNA2, possibly via the 5'-3' ssDNA translocase activity of HELB. As cells approach S phase, DNA end resection is promoted by the nuclear export of HELB following phosphorylation. Acts independently of TP53BP1. Unwinds duplex DNA with 5'-3' polarity. Has single-strand DNA-dependent ATPase and DNA helicase activities. Prefers ATP and dATP as substrates. During S phase, may facilitate cellular recovery from replication stress. The protein is DNA helicase B of Mus musculus (Mouse).